A 114-amino-acid polypeptide reads, in one-letter code: Large ribosomal subunit protein bL19 (114 aa).

It belongs to the bacterial ribosomal protein bL19 family.

Its function is as follows. This protein is located at the 30S-50S ribosomal subunit interface and may play a role in the structure and function of the aminoacyl-tRNA binding site. The chain is Large ribosomal subunit protein bL19 from Bacillus mycoides (strain KBAB4) (Bacillus weihenstephanensis).